Consider the following 431-residue polypeptide: Salivary plasminogen activator beta (431 aa).

Positions 1–36 are cleaved as a signal peptide; that stretch reads MVNTMKTKLLCVLLLCGAVFSLPRQETYRQLARGSR. The EGF-like domain maps to 37 to 75; sequence AYGGCSELRCFNGGTCWQAASFSDFVCQCPKGYTGKQCE. Disulfide bonds link Cys-41–Cys-52, Cys-46–Cys-63, Cys-65–Cys-74, Cys-82–Cys-163, Cys-103–Cys-145, Cys-134–Cys-158, Cys-168–Cys-299, Cys-211–Cys-227, Cys-219–Cys-288, Cys-313–Cys-388, Cys-345–Cys-361, and Cys-378–Cys-406. The Kringle domain maps to 82 to 163; sequence CYKDQGVTYR…ILEFCSVPVC (82 aa). N-linked (GlcNAc...) asparagine glycosylation occurs at Asn-139. Residues 180 to 430 form the Peptidase S1 domain; that stretch reads STGGLFTDIT…YLGWIRDNMR (251 aa). Catalysis depends on charge relay system residues His-226 and Asp-275. A glycan (N-linked (GlcNAc...) asparagine) is linked at Asn-352. The Charge relay system role is filled by Ser-382.

The protein belongs to the peptidase S1 family. Monomer.

The protein resides in the secreted. It catalyses the reaction Specific cleavage of Arg-|-Val bond in plasminogen to form plasmin.. Its function is as follows. Probably essential to support the feeding habits of this exclusively haematophagous animal. Probable potent thrombolytic agent. The protein is Salivary plasminogen activator beta of Desmodus rotundus (Vampire bat).